A 318-amino-acid chain; its full sequence is uncharacterized protein (318 aa).

It to A.aeolicus AA07 and AA11.

This is an uncharacterized protein from Aquifex aeolicus (strain VF5).